A 92-amino-acid chain; its full sequence is Small ribosomal subunit protein uS19 (92 aa).

This sequence belongs to the universal ribosomal protein uS19 family.

In terms of biological role, protein S19 forms a complex with S13 that binds strongly to the 16S ribosomal RNA. The chain is Small ribosomal subunit protein uS19 from Prochlorococcus marinus (strain MIT 9312).